The chain runs to 244 residues: MYQLPTSTELTFFPAEFPVYCRSSSFSSLMPCLTESWGDLPLKVNDSEDMVIYGFLQDAFSIGWTPSNLTSEEVKLEPREEIEPAMSTSVSPPTVAPAALQPKGRHYRGVRQRPWGKFAAEIRDPAKNGARVWLGTYESAEEAALAYGKAAFRMRGTKALLNFPHRIGLNEPEPVRVTVKRRLSESASSSVSSASESGSPKRRRKGVAAKQAELEVESRGPNVMKVGCQMFQLASSYWLVKIWS.

The segment at residues 106–164 (HYRGVRQRPWGKFAAEIRDPAKNGARVWLGTYESAEEAALAYGKAAFRMRGTKALLNFP) is a DNA-binding region (AP2/ERF). Residues 186 to 198 (SASSSVSSASESG) are compositionally biased toward low complexity. The interval 186-214 (SASSSVSSASESGSPKRRRKGVAAKQAEL) is disordered.

It belongs to the ethylene-response factor family. Class 1 subfamily. In terms of tissue distribution, present in stems.

It is found in the nucleus. In terms of biological role, involved in the regulation of gene expression during fruit ripening, by stress factors and by components of stress signal transduction pathways. Transcription factor that binds to the GCC-box pathogenesis-related promoter element. Probably acts as a transcriptional activator and may be involved in disease resistance pathways. The protein is Ethylene-responsive transcription factor 1 (ERF1) of Solanum lycopersicum (Tomato).